The chain runs to 155 residues: Myosin light chain alkali (155 aa).

2 consecutive EF-hand domains span residues 7–41 (REIE…LNLN) and 80–115 (GCYE…LGES).

Myosin is a hexamer of 2 heavy chains and 4 light chains.

This Drosophila pseudoobscura pseudoobscura (Fruit fly) protein is Myosin light chain alkali (Mlc1).